We begin with the raw amino-acid sequence, 524 residues long: Cysteine--tRNA ligase (524 aa).

Cys29 provides a ligand contact to Zn(2+). Positions 31-41 match the 'HIGH' region motif; sequence PTVQAAPHVGH. Zn(2+) contacts are provided by Cys207, His232, and Glu236. Residues 246-258 are compositionally biased toward low complexity; that stretch reads ARPASNAASADSP. The disordered stretch occupies residues 246-273; sequence ARPASNAASADSPGPGGGEPGGGEPSSG. Gly residues predominate over residues 259–270; it reads GPGGGEPGGGEP. Residues 291–295 carry the 'KMSKS' region motif; the sequence is KMSKS. Lys294 serves as a coordination point for ATP.

The protein belongs to the class-I aminoacyl-tRNA synthetase family. Monomer. Requires Zn(2+) as cofactor.

The protein resides in the cytoplasm. It carries out the reaction tRNA(Cys) + L-cysteine + ATP = L-cysteinyl-tRNA(Cys) + AMP + diphosphate. In Frankia casuarinae (strain DSM 45818 / CECT 9043 / HFP020203 / CcI3), this protein is Cysteine--tRNA ligase.